We begin with the raw amino-acid sequence, 173 residues long: MAARMDPGIGGEVTLLHTSQLDNLINLARASSLYYLTFGLACCGIELMQTGGPRADLMRFGAIPRASPRQADFMIVAGTLTYKMAERARLLYDQMPEPKYVISMGSCSNCGGLFQLGYSVCKGVDKVIPVDVYVPGCPPRPEALTEGLLRLQEIVRSEPWSTKRRPAAQAEGA.

Positions 42, 43, 107, and 137 each coordinate [4Fe-4S] cluster.

Belongs to the complex I 20 kDa subunit family. NDH-1 is composed of 14 different subunits. Subunits NuoB, C, D, E, F, and G constitute the peripheral sector of the complex. It depends on [4Fe-4S] cluster as a cofactor.

It localises to the cell inner membrane. The enzyme catalyses a quinone + NADH + 5 H(+)(in) = a quinol + NAD(+) + 4 H(+)(out). Its function is as follows. NDH-1 shuttles electrons from NADH, via FMN and iron-sulfur (Fe-S) centers, to quinones in the respiratory chain. Couples the redox reaction to proton translocation (for every two electrons transferred, four hydrogen ions are translocated across the cytoplasmic membrane), and thus conserves the redox energy in a proton gradient. The sequence is that of NADH-quinone oxidoreductase subunit B 2 from Anaeromyxobacter dehalogenans (strain 2CP-C).